Reading from the N-terminus, the 288-residue chain is Probable branched-chain-amino-acid aminotransferase (288 aa).

At lysine 153 the chain carries N6-(pyridoxal phosphate)lysine.

It belongs to the class-IV pyridoxal-phosphate-dependent aminotransferase family. The cofactor is pyridoxal 5'-phosphate.

It catalyses the reaction L-leucine + 2-oxoglutarate = 4-methyl-2-oxopentanoate + L-glutamate. The catalysed reaction is L-isoleucine + 2-oxoglutarate = (S)-3-methyl-2-oxopentanoate + L-glutamate. It carries out the reaction L-valine + 2-oxoglutarate = 3-methyl-2-oxobutanoate + L-glutamate. It functions in the pathway amino-acid biosynthesis; L-isoleucine biosynthesis; L-isoleucine from 2-oxobutanoate: step 4/4. Its pathway is amino-acid biosynthesis; L-leucine biosynthesis; L-leucine from 3-methyl-2-oxobutanoate: step 4/4. The protein operates within amino-acid biosynthesis; L-valine biosynthesis; L-valine from pyruvate: step 4/4. Its function is as follows. Acts on leucine, isoleucine and valine. The polypeptide is Probable branched-chain-amino-acid aminotransferase (ilvE) (Rickettsia typhi (strain ATCC VR-144 / Wilmington)).